Here is a 503-residue protein sequence, read N- to C-terminus: Lysine--tRNA ligase (503 aa).

Residues E410 and E417 each coordinate Mg(2+).

Belongs to the class-II aminoacyl-tRNA synthetase family. Homodimer. Requires Mg(2+) as cofactor.

It is found in the cytoplasm. The enzyme catalyses tRNA(Lys) + L-lysine + ATP = L-lysyl-tRNA(Lys) + AMP + diphosphate. The chain is Lysine--tRNA ligase from Prochlorococcus marinus (strain MIT 9211).